The following is a 484-amino-acid chain: Chromosomal replication initiator protein DnaA (484 aa).

The segment at Met-1–Thr-73 is domain I, interacts with DnaA modulators. Residues Thr-73–Pro-140 are domain II. The tract at residues Phe-141–Ile-357 is domain III, AAA+ region. ATP is bound by residues Gly-185, Gly-187, Lys-188, and Thr-189. A domain IV, binds dsDNA region spans residues Asp-358–Asn-484.

It belongs to the DnaA family. As to quaternary structure, oligomerizes as a right-handed, spiral filament on DNA at oriC.

The protein localises to the cytoplasm. Functionally, plays an essential role in the initiation and regulation of chromosomal replication. ATP-DnaA binds to the origin of replication (oriC) to initiate formation of the DNA replication initiation complex once per cell cycle. Binds the DnaA box (a 9 base pair repeat at the origin) and separates the double-stranded (ds)DNA. Forms a right-handed helical filament on oriC DNA; dsDNA binds to the exterior of the filament while single-stranded (ss)DNA is stabiized in the filament's interior. The ATP-DnaA-oriC complex binds and stabilizes one strand of the AT-rich DNA unwinding element (DUE), permitting loading of DNA polymerase. After initiation quickly degrades to an ADP-DnaA complex that is not apt for DNA replication. Binds acidic phospholipids. This Borrelia recurrentis (strain A1) protein is Chromosomal replication initiator protein DnaA.